The following is a 231-amino-acid chain: Probable septum site-determining protein MinC (231 aa).

The interval 102-125 is disordered; the sequence is KEKAPRPAPAPQAPTQNTTPVTKT. Residues 114 to 123 show a composition bias toward low complexity; the sequence is APTQNTTPVT.

Belongs to the MinC family. Interacts with MinD and FtsZ.

Cell division inhibitor that blocks the formation of polar Z ring septums. Rapidly oscillates between the poles of the cell to destabilize FtsZ filaments that have formed before they mature into polar Z rings. Prevents FtsZ polymerization. The polypeptide is Probable septum site-determining protein MinC (Escherichia coli O45:K1 (strain S88 / ExPEC)).